Here is a 307-residue protein sequence, read N- to C-terminus: N-acetylmuramic acid 6-phosphate etherase (307 aa).

The region spanning 62-225 (IVLAFQKGAR…TTASMIRIGK (164 aa)) is the SIS domain. The active-site Proton donor is glutamate 90. Glutamate 121 is a catalytic residue.

It belongs to the GCKR-like family. MurNAc-6-P etherase subfamily. In terms of assembly, homodimer.

It carries out the reaction N-acetyl-D-muramate 6-phosphate + H2O = N-acetyl-D-glucosamine 6-phosphate + (R)-lactate. The protein operates within amino-sugar metabolism; 1,6-anhydro-N-acetylmuramate degradation. It functions in the pathway amino-sugar metabolism; N-acetylmuramate degradation. It participates in cell wall biogenesis; peptidoglycan recycling. In terms of biological role, specifically catalyzes the cleavage of the D-lactyl ether substituent of MurNAc 6-phosphate, producing GlcNAc 6-phosphate and D-lactate. Together with AnmK, is also required for the utilization of anhydro-N-acetylmuramic acid (anhMurNAc) either imported from the medium or derived from its own cell wall murein, and thus plays a role in cell wall recycling. The protein is N-acetylmuramic acid 6-phosphate etherase of Mesorhizobium japonicum (strain LMG 29417 / CECT 9101 / MAFF 303099) (Mesorhizobium loti (strain MAFF 303099)).